We begin with the raw amino-acid sequence, 471 residues long: 3-isopropylmalate dehydratase large subunit (471 aa).

[4Fe-4S] cluster is bound by residues cysteine 347, cysteine 407, and cysteine 410. The interval 417–443 (TLQPGERSASTSNRNFEGRQGKGGRTH) is disordered.

The protein belongs to the aconitase/IPM isomerase family. LeuC type 1 subfamily. Heterodimer of LeuC and LeuD. The cofactor is [4Fe-4S] cluster.

The catalysed reaction is (2R,3S)-3-isopropylmalate = (2S)-2-isopropylmalate. It participates in amino-acid biosynthesis; L-leucine biosynthesis; L-leucine from 3-methyl-2-oxobutanoate: step 2/4. Its function is as follows. Catalyzes the isomerization between 2-isopropylmalate and 3-isopropylmalate, via the formation of 2-isopropylmaleate. The sequence is that of 3-isopropylmalate dehydratase large subunit from Nocardioides sp. (strain ATCC BAA-499 / JS614).